The primary structure comprises 50 residues: Mating-type pheromone BAP1(1) (50 aa).

The tract at residues Met-1–Trp-32 is disordered. The segment covering Ser-16 to Ala-26 has biased composition (low complexity). Cys-47 carries the post-translational modification Cysteine methyl ester. Cys-47 carries the S-farnesyl cysteine lipid modification. Residues Val-48–His-50 constitute a propeptide, removed in mature form.

It is found in the cell membrane. Its function is as follows. Activates B-regulated development. This Schizophyllum commune (Split gill fungus) protein is Mating-type pheromone BAP1(1) (BAP1(1)).